The chain runs to 299 residues: tRNA uridine(34) hydroxylase (299 aa).

Residues 132-226 form the Rhodanese domain; it reads ASRPVVMLDT…YFEEVGGAHY (95 aa). Cys-186 serves as the catalytic Cysteine persulfide intermediate.

The protein belongs to the TrhO family.

The catalysed reaction is uridine(34) in tRNA + AH2 + O2 = 5-hydroxyuridine(34) in tRNA + A + H2O. Functionally, catalyzes oxygen-dependent 5-hydroxyuridine (ho5U) modification at position 34 in tRNAs. The chain is tRNA uridine(34) hydroxylase from Burkholderia pseudomallei (strain K96243).